A 191-amino-acid chain; its full sequence is Leucyl/phenylalanyl-tRNA--protein transferase (191 aa).

It belongs to the L/F-transferase family.

It is found in the cytoplasm. The catalysed reaction is N-terminal L-lysyl-[protein] + L-leucyl-tRNA(Leu) = N-terminal L-leucyl-L-lysyl-[protein] + tRNA(Leu) + H(+). It carries out the reaction N-terminal L-arginyl-[protein] + L-leucyl-tRNA(Leu) = N-terminal L-leucyl-L-arginyl-[protein] + tRNA(Leu) + H(+). The enzyme catalyses L-phenylalanyl-tRNA(Phe) + an N-terminal L-alpha-aminoacyl-[protein] = an N-terminal L-phenylalanyl-L-alpha-aminoacyl-[protein] + tRNA(Phe). Its function is as follows. Functions in the N-end rule pathway of protein degradation where it conjugates Leu, Phe and, less efficiently, Met from aminoacyl-tRNAs to the N-termini of proteins containing an N-terminal arginine or lysine. The chain is Leucyl/phenylalanyl-tRNA--protein transferase from Nostoc sp. (strain PCC 7120 / SAG 25.82 / UTEX 2576).